The primary structure comprises 1025 residues: Collagen alpha-1(VI) chain (1025 aa).

An N-terminal signal peptide occupies residues 1 to 19; it reads MRLAHALLPLLLQACWVAT. Residues 20–255 form an N-terminal globular domain region; sequence QDIQGSKAIA…CCSFECQAAR (236 aa). The 199-residue stretch at 36–234 folds into the VWFA 1 domain; sequence DLFFVLDTSE…EVISQTIDTI (199 aa). An N-linked (GlcNAc...) asparagine glycan is attached at N211. Residues 252–588 are disordered; it reads QAARGPPGPR…QGPPGHVGPP (337 aa). The tract at residues 256–591 is triple-helical region; that stretch reads GPPGPRGDPG…PGHVGPPGPD (336 aa). Positions 261-263 match the Cell attachment site motif; the sequence is RGD. Composition is skewed to basic and acidic residues over residues 267 to 284 and 300 to 333; these read EGER…EAGD and KGEK…DGMK. Short sequence motifs (cell attachment site) lie at residues 441–443 and 477–479; these read RGD. N-linked (GlcNAc...) asparagine glycosylation is found at N515 and N536. Residues 549–559 show a composition bias toward acidic residues; the sequence is GEVGDPGEDNN. Positions 578 to 588 are enriched in pro residues; the sequence is PQGPPGHVGPP. Residues 592-1025 are C-terminal globular domain; that stretch reads ECEILDIIMK…QTVSRKVALG (434 aa). VWFA domains are found at residues 614–802 and 826–1018; these read DILF…LKNI and DITI…YQTV. 2 N-linked (GlcNAc...) asparagine glycosylation sites follow: N801 and N893.

The protein belongs to the type VI collagen family. Trimers composed of three different chains: alpha-1(VI), alpha-2(VI), and alpha-3(VI) or alpha-4(VI) or alpha-5(VI) or alpha-6(VI). Prolines at the third position of the tripeptide repeating unit (G-X-Y) are hydroxylated in some or all of the chains.

Its subcellular location is the secreted. It is found in the extracellular space. It localises to the extracellular matrix. Its function is as follows. Collagen VI acts as a cell-binding protein. This is Collagen alpha-1(VI) chain (Col6a1) from Mus musculus (Mouse).